Consider the following 858-residue polypeptide: Potassium transporter 7 (858 aa).

Acidic residues-rich tracts occupy residues 1-16 (MAEE…EEID) and 38-53 (QDDD…DNDG). The segment at 1-68 (MAEESSMEGS…LESDEDEIPE (68 aa)) is disordered. The Cytoplasmic portion of the chain corresponds to 1–104 (MAEESSMEGS…DYEDLTVGRK (104 aa)). A helical transmembrane segment spans residues 105–125 (VLLAFQTLGVVFGDVGTSPLY). Over 126 to 147 (TFSVMFSKSPVQEKEDVIGALS) the chain is Extracellular. The chain crosses the membrane as a helical span at residues 148 to 168 (LVLYTLLLVPLIKYVLVVLWA). The Cytoplasmic portion of the chain corresponds to 169–232 (NDDGEGGTFA…KLENSLILKK (64 aa)). Residues 233–253 (ILLVLVLAGTSMVIADGVVTP) form a helical membrane-spanning segment. At 254–269 (AMSVMSAVGGLKVGVD) the chain is on the extracellular side. A helical membrane pass occupies residues 270 to 290 (VVEQDQVVMISVAFLVILFSL). Residues 291–297 (QKYGTSK) are Cytoplasmic-facing. Residues 298–318 (MGLVVGPALLIWFCSLAGIGI) form a helical membrane-spanning segment. Over 319-345 (YNLIKYDSSVYRAFNPVHIYYFFKRNS) the chain is Extracellular. Residues 346 to 366 (INAWYALGGCILCATGSEALF) traverse the membrane as a helical segment. At 367 to 380 (ADLCYFSVRSVQLT) the chain is on the cytoplasmic side. A helical membrane pass occupies residues 381–401 (FVCLVLPCLMLGYMGQAAYLM). Residues 402-413 (ENHADASQAFFS) are Extracellular-facing. A helical transmembrane segment spans residues 414–434 (SVPGSAFWPVLFIANIAALIA). Topologically, residues 435-470 (SRTMTTATFSCIKQSTALGCFPRLKIIHTSRKFMGQ) are cytoplasmic. Residues 471–491 (IYIPVLNWFLLAVCLVVVCSI) form a helical membrane-spanning segment. Over 492–496 (SSIDE) the chain is Extracellular. Residues 497–517 (IGNAYGMAELGVMMTTTILVT) form a helical membrane-spanning segment. Position 518 (Leu-518) is a topological domain, cytoplasmic. Residues 519-539 (IMLLIWQINIVIVIAFLVVFL) form a helical membrane-spanning segment. At 540-552 (GVELVFFSSVIAS) the chain is on the extracellular side. Residues 553–573 (VGDGSWIILVFAVIMFGIMYI) form a helical membrane-spanning segment. At 574–858 (WNYGSKLRYE…LMQVGMTYMV (285 aa)) the chain is on the cytoplasmic side. Residues 707–731 (QERSLESDGNDDSDSEEDFPGSRVV) are disordered. Over residues 714–725 (DGNDDSDSEEDF) the composition is skewed to acidic residues. Residues Ser-719 and Ser-721 each carry the phosphoserine modification.

The protein belongs to the HAK/KUP transporter (TC 2.A.72.3) family.

The protein resides in the cell membrane. Its function is as follows. Probable potassium transporter. This Arabidopsis thaliana (Mouse-ear cress) protein is Potassium transporter 7 (POT7).